The sequence spans 438 residues: 5-methylthioadenosine/S-adenosylhomocysteine deaminase (438 aa).

Zn(2+) is bound by residues His71 and His73. Residues Glu100 and His192 each coordinate substrate. A Zn(2+)-binding site is contributed by His219. Glu222 and Asp307 together coordinate substrate. Residue Asp307 participates in Zn(2+) binding.

It belongs to the metallo-dependent hydrolases superfamily. MTA/SAH deaminase family. Zn(2+) serves as cofactor.

It carries out the reaction S-adenosyl-L-homocysteine + H2O + H(+) = S-inosyl-L-homocysteine + NH4(+). The catalysed reaction is S-methyl-5'-thioadenosine + H2O + H(+) = S-methyl-5'-thioinosine + NH4(+). Its function is as follows. Catalyzes the deamination of 5-methylthioadenosine and S-adenosyl-L-homocysteine into 5-methylthioinosine and S-inosyl-L-homocysteine, respectively. Is also able to deaminate adenosine. This chain is 5-methylthioadenosine/S-adenosylhomocysteine deaminase, found in Syntrophobacter fumaroxidans (strain DSM 10017 / MPOB).